The following is a 679-amino-acid chain: Single-strand DNA endonuclease ASTE1 (679 aa).

The interval 351–400 is interaction with SHLD2; the sequence is TILPTQVENMQQPNAHRISQPIRQIIYGLLLNASPHLDKTSWNALPPQPL. A disordered region spans residues 625-645; that stretch reads RSNSKKKRQKKQNTSCSKNRG. Over residues 626–635 the composition is skewed to basic residues; it reads SNSKKKRQKK.

Belongs to the asteroid family. Interacts with SHLD1, SHLD2, SHLD3, RIF1 and MAD2L2/REV7.

Functionally, structure-specific DNA endonuclease that specifically cleaves single-stranded DNA and 3' overhang DNA. Contributes to the control of DNA double-strand break repair choice by antagonizing BRCA1-dependent homologous recombination (HR) and promoting non-homologous end-joining (NHEJ). Recruited to the single-stranded DNA ends by SHLD2 and cleaves the 3' exposed DNA ends, therefore inhibiting DNA end resection (necessary for HR) and promoting DNA end protection (necessary for NHEJ). This is Single-strand DNA endonuclease ASTE1 (ASTE1) from Pongo abelii (Sumatran orangutan).